Reading from the N-terminus, the 197-residue chain is Dephospho-CoA kinase (197 aa).

Residues 2-197 (IVGLTGGIAS…YQQILSLNAA (196 aa)) enclose the DPCK domain. 10 to 15 (ASGKTL) serves as a coordination point for ATP.

This sequence belongs to the CoaE family.

The protein localises to the cytoplasm. The catalysed reaction is 3'-dephospho-CoA + ATP = ADP + CoA + H(+). It functions in the pathway cofactor biosynthesis; coenzyme A biosynthesis; CoA from (R)-pantothenate: step 5/5. Catalyzes the phosphorylation of the 3'-hydroxyl group of dephosphocoenzyme A to form coenzyme A. The sequence is that of Dephospho-CoA kinase from Dichelobacter nodosus (Bacteroides nodosus).